Consider the following 112-residue polypeptide: Transmembrane protein 14C (112 aa).

The next 4 helical transmembrane spans lie at 7 to 27 (VVPL…GGII), 32 to 52 (AGSV…GLGA), 62 to 82 (VWVF…RFYH), and 88 to 108 (PAGL…VSMF).

The protein belongs to the TMEM14 family.

It is found in the mitochondrion membrane. Required for normal heme biosynthesis. The protein is Transmembrane protein 14C (TMEM14C) of Homo sapiens (Human).